Consider the following 281-residue polypeptide: Urease accessory protein UreD 2 (281 aa).

Belongs to the UreD family. As to quaternary structure, ureD, UreF and UreG form a complex that acts as a GTP-hydrolysis-dependent molecular chaperone, activating the urease apoprotein by helping to assemble the nickel containing metallocenter of UreC. The UreE protein probably delivers the nickel.

The protein resides in the cytoplasm. Required for maturation of urease via the functional incorporation of the urease nickel metallocenter. This is Urease accessory protein UreD 2 from Pseudomonas syringae pv. syringae (strain B728a).